The following is a 488-amino-acid chain: Probable glycine dehydrogenase (decarboxylating) subunit 2 (488 aa).

Lysine 274 is subject to N6-(pyridoxal phosphate)lysine.

This sequence belongs to the GcvP family. C-terminal subunit subfamily. As to quaternary structure, the glycine cleavage system is composed of four proteins: P, T, L and H. In this organism, the P 'protein' is a heterodimer of two subunits. It depends on pyridoxal 5'-phosphate as a cofactor.

It catalyses the reaction N(6)-[(R)-lipoyl]-L-lysyl-[glycine-cleavage complex H protein] + glycine + H(+) = N(6)-[(R)-S(8)-aminomethyldihydrolipoyl]-L-lysyl-[glycine-cleavage complex H protein] + CO2. In terms of biological role, the glycine cleavage system catalyzes the degradation of glycine. The P protein binds the alpha-amino group of glycine through its pyridoxal phosphate cofactor; CO(2) is released and the remaining methylamine moiety is then transferred to the lipoamide cofactor of the H protein. In Listeria welshimeri serovar 6b (strain ATCC 35897 / DSM 20650 / CCUG 15529 / CIP 8149 / NCTC 11857 / SLCC 5334 / V8), this protein is Probable glycine dehydrogenase (decarboxylating) subunit 2.